Consider the following 129-residue polypeptide: Aspartate 1-decarboxylase (129 aa).

The active-site Schiff-base intermediate with substrate; via pyruvic acid is the Ser-25. Residue Ser-25 is modified to Pyruvic acid (Ser). A substrate-binding site is contributed by Thr-57. The active-site Proton donor is Tyr-58. 73–75 (GAA) is a binding site for substrate.

Belongs to the PanD family. As to quaternary structure, heterooctamer of four alpha and four beta subunits. It depends on pyruvate as a cofactor. Is synthesized initially as an inactive proenzyme, which is activated by self-cleavage at a specific serine bond to produce a beta-subunit with a hydroxyl group at its C-terminus and an alpha-subunit with a pyruvoyl group at its N-terminus.

It is found in the cytoplasm. It carries out the reaction L-aspartate + H(+) = beta-alanine + CO2. Its pathway is cofactor biosynthesis; (R)-pantothenate biosynthesis; beta-alanine from L-aspartate: step 1/1. Catalyzes the pyruvoyl-dependent decarboxylation of aspartate to produce beta-alanine. The sequence is that of Aspartate 1-decarboxylase from Prosthecochloris aestuarii (strain DSM 271 / SK 413).